The following is a 286-amino-acid chain: ATP synthase gamma chain (286 aa).

The protein belongs to the ATPase gamma chain family. As to quaternary structure, F-type ATPases have 2 components, CF(1) - the catalytic core - and CF(0) - the membrane proton channel. CF(1) has five subunits: alpha(3), beta(3), gamma(1), delta(1), epsilon(1). CF(0) has three main subunits: a, b and c.

Its subcellular location is the cell inner membrane. In terms of biological role, produces ATP from ADP in the presence of a proton gradient across the membrane. The gamma chain is believed to be important in regulating ATPase activity and the flow of protons through the CF(0) complex. This is ATP synthase gamma chain from Shewanella sp. (strain ANA-3).